The sequence spans 339 residues: Nicotinate-nucleotide--dimethylbenzimidazole phosphoribosyltransferase (339 aa).

The active-site Proton acceptor is the Glu306.

It belongs to the CobT family.

The enzyme catalyses 5,6-dimethylbenzimidazole + nicotinate beta-D-ribonucleotide = alpha-ribazole 5'-phosphate + nicotinate + H(+). Its pathway is nucleoside biosynthesis; alpha-ribazole biosynthesis; alpha-ribazole from 5,6-dimethylbenzimidazole: step 1/2. Catalyzes the synthesis of alpha-ribazole-5'-phosphate from nicotinate mononucleotide (NAMN) and 5,6-dimethylbenzimidazole (DMB). The polypeptide is Nicotinate-nucleotide--dimethylbenzimidazole phosphoribosyltransferase (Brucella melitensis biotype 2 (strain ATCC 23457)).